Reading from the N-terminus, the 427-residue chain is Flotillin-1 (427 aa).

Serine 19, serine 163, and serine 385 each carry phosphoserine.

Belongs to the band 7/mec-2 family. Flotillin subfamily. Heterooligomeric complex of flotillin-1 and flotillin-2 and caveolin-1 and caveolin-2. Interacts with ECPAS.

It localises to the cell membrane. The protein localises to the endosome. It is found in the membrane. The protein resides in the caveola. Its subcellular location is the melanosome. It localises to the membrane raft. May act as a scaffolding protein within caveolar membranes, functionally participating in formation of caveolae or caveolae-like vesicles. This is Flotillin-1 (FLOT1) from Bos taurus (Bovine).